A 483-amino-acid chain; its full sequence is Protein nucleotidyltransferase YdiU (483 aa).

Residues glycine 81, glycine 83, arginine 84, lysine 103, aspartate 115, glycine 116, arginine 166, and arginine 173 each coordinate ATP. Aspartate 244 acts as the Proton acceptor in catalysis. Mg(2+)-binding residues include asparagine 245 and aspartate 254. Aspartate 254 provides a ligand contact to ATP.

Belongs to the SELO family. Requires Mg(2+) as cofactor. The cofactor is Mn(2+).

It carries out the reaction L-seryl-[protein] + ATP = 3-O-(5'-adenylyl)-L-seryl-[protein] + diphosphate. The enzyme catalyses L-threonyl-[protein] + ATP = 3-O-(5'-adenylyl)-L-threonyl-[protein] + diphosphate. The catalysed reaction is L-tyrosyl-[protein] + ATP = O-(5'-adenylyl)-L-tyrosyl-[protein] + diphosphate. It catalyses the reaction L-histidyl-[protein] + UTP = N(tele)-(5'-uridylyl)-L-histidyl-[protein] + diphosphate. It carries out the reaction L-seryl-[protein] + UTP = O-(5'-uridylyl)-L-seryl-[protein] + diphosphate. The enzyme catalyses L-tyrosyl-[protein] + UTP = O-(5'-uridylyl)-L-tyrosyl-[protein] + diphosphate. Nucleotidyltransferase involved in the post-translational modification of proteins. It can catalyze the addition of adenosine monophosphate (AMP) or uridine monophosphate (UMP) to a protein, resulting in modifications known as AMPylation and UMPylation. This chain is Protein nucleotidyltransferase YdiU, found in Shewanella halifaxensis (strain HAW-EB4).